Reading from the N-terminus, the 352-residue chain is Protein RecA (352 aa).

67–74 (GPESSGKT) contributes to the ATP binding site.

This sequence belongs to the RecA family.

The protein localises to the cytoplasm. In terms of biological role, can catalyze the hydrolysis of ATP in the presence of single-stranded DNA, the ATP-dependent uptake of single-stranded DNA by duplex DNA, and the ATP-dependent hybridization of homologous single-stranded DNAs. It interacts with LexA causing its activation and leading to its autocatalytic cleavage. The chain is Protein RecA from Chlamydia trachomatis serovar L2 (strain ATCC VR-902B / DSM 19102 / 434/Bu).